The primary structure comprises 513 residues: GMP synthase [glutamine-hydrolyzing] (513 aa).

Positions 9-198 (LILVLDFGSQ…VRRVCDCKGQ (190 aa)) constitute a Glutamine amidotransferase type-1 domain. The active-site Nucleophile is cysteine 86. Active-site residues include histidine 172 and glutamate 174. The region spanning 199-388 (WTMENFIEIE…LGIPEHLVWR (190 aa)) is the GMPS ATP-PPase domain. Residue 226–232 (SGGVDSS) coordinates ATP.

Homodimer.

The catalysed reaction is XMP + L-glutamine + ATP + H2O = GMP + L-glutamate + AMP + diphosphate + 2 H(+). It functions in the pathway purine metabolism; GMP biosynthesis; GMP from XMP (L-Gln route): step 1/1. Catalyzes the synthesis of GMP from XMP. The chain is GMP synthase [glutamine-hydrolyzing] from Staphylococcus aureus (strain Mu3 / ATCC 700698).